The sequence spans 294 residues: Uracil-DNA glycosylase (294 aa).

Aspartate 139 acts as the Proton acceptor in catalysis.

Belongs to the uracil-DNA glycosylase (UDG) superfamily. UNG family.

The protein localises to the host nucleus. The enzyme catalyses Hydrolyzes single-stranded DNA or mismatched double-stranded DNA and polynucleotides, releasing free uracil.. Functionally, excises uracil residues from the DNA which can arise as a result of misincorporation of dUMP residues by DNA polymerase or deamination of cytosines. Therefore may reduce deleterious uracil incorporation into the viral genome, particularly in terminally differentiated cells which lack DNA repair enzymes. The chain is Uracil-DNA glycosylase (UL2) from Human herpesvirus 2 (strain 333) (HHV-2).